Consider the following 150-residue polypeptide: Large ribosomal subunit protein bL9 (150 aa).

It belongs to the bacterial ribosomal protein bL9 family.

Its function is as follows. Binds to the 23S rRNA. The polypeptide is Large ribosomal subunit protein bL9 (Ralstonia pickettii (strain 12J)).